Consider the following 189-residue polypeptide: Protein GrpE (189 aa).

A disordered region spans residues 1–37; the sequence is MSDSSKEKKKKFADMVSRQKGDDQQSDNHKQTDDLNE. Residues 17 to 33 are compositionally biased toward basic and acidic residues; that stretch reads SRQKGDDQQSDNHKQTD.

This sequence belongs to the GrpE family. As to quaternary structure, homodimer.

Its subcellular location is the cytoplasm. Functionally, participates actively in the response to hyperosmotic and heat shock by preventing the aggregation of stress-denatured proteins, in association with DnaK and GrpE. It is the nucleotide exchange factor for DnaK and may function as a thermosensor. Unfolded proteins bind initially to DnaJ; upon interaction with the DnaJ-bound protein, DnaK hydrolyzes its bound ATP, resulting in the formation of a stable complex. GrpE releases ADP from DnaK; ATP binding to DnaK triggers the release of the substrate protein, thus completing the reaction cycle. Several rounds of ATP-dependent interactions between DnaJ, DnaK and GrpE are required for fully efficient folding. The polypeptide is Protein GrpE (Wolbachia sp. subsp. Drosophila simulans (strain wRi)).